We begin with the raw amino-acid sequence, 125 residues long: MASNTSFLFATIAILLVLNISGRTLPETEDSTNIAARLNGGGLMECWNALYELKSCTNEIVLFFLNGETKLGVDCCQAVEVITTDCWPAMLTSLGFTSDETNVLRGFCQSPNSGGSSPAPSSVKL.

The N-terminal stretch at 1–22 (MASNTSFLFATIAILLVLNISG) is a signal peptide.

This sequence belongs to the plant egg cell-secreted peptide family. Restricted to female reproductive tissues, specifically accumulating in storage vesicles of the unfertilized egg cell.

The protein resides in the cytoplasmic vesicle. The protein localises to the secreted. Involved in the regulation of gamete interactions during the double fertilization and to prevent multiple-pollen tube attraction; mediates the redistribution of the gamete fusogen HAP2/GCS1 to the cell surface after secretion upon sperm arrival. The protein is Egg cell-secreted protein 1.2 (EC1.2) of Arabidopsis thaliana (Mouse-ear cress).